Reading from the N-terminus, the 449-residue chain is Kynurenine 3-monooxygenase (449 aa).

It belongs to the aromatic-ring hydroxylase family. KMO subfamily. FAD is required as a cofactor.

It carries out the reaction L-kynurenine + NADPH + O2 + H(+) = 3-hydroxy-L-kynurenine + NADP(+) + H2O. Its pathway is cofactor biosynthesis; NAD(+) biosynthesis; quinolinate from L-kynurenine: step 1/3. In terms of biological role, catalyzes the hydroxylation of L-kynurenine (L-Kyn) to form 3-hydroxy-L-kynurenine (L-3OHKyn). Required for synthesis of quinolinic acid. This is Kynurenine 3-monooxygenase from Legionella pneumophila (strain Lens).